Consider the following 988-residue polypeptide: Ubiquitin carboxyl-terminal hydrolase 36 (988 aa).

A disordered region spans residues 16 to 55; the sequence is PTLRTDNNGARKQAEHPNNQSHHNHPHPTSNPNELPKPKR. A compositionally biased stretch (low complexity) spans 31 to 48; it reads HPNNQSHHNHPHPTSNPN. A USP domain is found at 78–386; the sequence is TGMINVGNTC…NAYIMFFELD (309 aa). Cys-87 functions as the Nucleophile in the catalytic mechanism. The active-site Proton acceptor is the His-345. Disordered regions lie at residues 393–422, 483–782, and 868–988; these read PPAN…SPSP, ATSA…VTSN, and EQRQ…QQQT. 2 stretches are compositionally biased toward low complexity: residues 408–422 and 490–509; these read STTP…SPSP and NGNK…KSIN. 2 positions are modified to phosphoserine: Ser-419 and Ser-421. The span at 532-544 shows a compositional bias: polar residues; sequence TTAQLPSMPNMTE. A phosphothreonine mark is found at Thr-561 and Thr-565. Ser-575 and Ser-577 each carry phosphoserine. Residues 592-601 show a composition bias toward acidic residues; it reads EGEDFSESDQ. Over residues 602–631 the composition is skewed to polar residues; it reads ESGQTNGHSKTNGSLTNGSASSSVHVNNSK. Residues 632 to 649 are compositionally biased toward basic and acidic residues; sequence QKTDAIDEIFKSLKKSAD. Ser-650 carries the post-translational modification Phosphoserine. Residues 650–659 are compositionally biased toward acidic residues; the sequence is SEEDDDEEEP. The segment covering 669 to 679 has biased composition (low complexity); sequence PQKQSQSQSKA. Residues 680-689 are compositionally biased toward pro residues; it reads PPSPKTPPSP. The residue at position 682 (Ser-682) is a Phosphoserine. Thr-685 carries the phosphothreonine modification. The residue at position 688 (Ser-688) is a Phosphoserine. Residues 707–717 are compositionally biased toward acidic residues; it reads VDAIDDDDDAV. Residue Thr-728 is modified to Phosphothreonine. Residues 735–747 show a composition bias toward polar residues; sequence NPFSSSKPSTDSP. The residue at position 746 (Ser-746) is a Phosphoserine. Thr-749 is subject to Phosphothreonine. Residues 762–782 show a composition bias toward polar residues; it reads ALKSHQQPRVGNGYQSNVTSN. Low complexity-rich tracts occupy residues 892–903 and 930–943; these read SGSAKGNNASNS and RFHN…FQQR.

The protein belongs to the peptidase C19 family. Interacts with atms/PAF1, but not with CycT.

It is found in the nucleus. Its subcellular location is the nucleolus. The catalysed reaction is Thiol-dependent hydrolysis of ester, thioester, amide, peptide and isopeptide bonds formed by the C-terminal Gly of ubiquitin (a 76-residue protein attached to proteins as an intracellular targeting signal).. In terms of biological role, required for maintaining multiple types of adult stem cells, including male and female germline, epithelial follicle cell and intestinal stem cells. May function as a transcriptional repressor by continually deubiquiting histone H2B at the promoters of genes critical for cellular differentiation, thereby preventing histone H3 'Lys-4' trimethylation (H3K4). Controls selective autophagy activation by ubiquitinated proteins. This Drosophila simulans (Fruit fly) protein is Ubiquitin carboxyl-terminal hydrolase 36 (Usp36).